We begin with the raw amino-acid sequence, 472 residues long: ATP synthase subunit beta (472 aa).

157-164 is a binding site for ATP; it reads GGAGVGKT.

The protein belongs to the ATPase alpha/beta chains family. As to quaternary structure, F-type ATPases have 2 components, CF(1) - the catalytic core - and CF(0) - the membrane proton channel. CF(1) has five subunits: alpha(3), beta(3), gamma(1), delta(1), epsilon(1). CF(0) has three main subunits: a(1), b(2) and c(9-12). The alpha and beta chains form an alternating ring which encloses part of the gamma chain. CF(1) is attached to CF(0) by a central stalk formed by the gamma and epsilon chains, while a peripheral stalk is formed by the delta and b chains.

The protein localises to the cell membrane. The enzyme catalyses ATP + H2O + 4 H(+)(in) = ADP + phosphate + 5 H(+)(out). Functionally, produces ATP from ADP in the presence of a proton gradient across the membrane. The catalytic sites are hosted primarily by the beta subunits. This chain is ATP synthase subunit beta, found in Desulforudis audaxviator (strain MP104C).